The following is a 25-amino-acid chain: Small ribosomal subunit protein eS32A (25 aa).

Residues 1 to 25 (MRDKWRKKRVRRLKRKRRKMRARSK) are disordered.

The protein belongs to the eukaryotic ribosomal protein eS32 family. In terms of assembly, component of the large ribosomal subunit (LSU). Mature yeast ribosomes consist of a small (40S) and a large (60S) subunit. The 40S small subunit contains 1 molecule of ribosomal RNA (18S rRNA) and at least 33 different proteins. The large 60S subunit contains 3 rRNA molecules (25S, 5.8S and 5S rRNA) and at least 46 different proteins.

The protein resides in the cytoplasm. Its subcellular location is the nucleus. In terms of biological role, component of the ribosome, a large ribonucleoprotein complex responsible for the synthesis of proteins in the cell. The small ribosomal subunit (SSU) binds messenger RNAs (mRNAs) and translates the encoded message by selecting cognate aminoacyl-transfer RNA (tRNA) molecules. The large subunit (LSU) contains the ribosomal catalytic site termed the peptidyl transferase center (PTC), which catalyzes the formation of peptide bonds, thereby polymerizing the amino acids delivered by tRNAs into a polypeptide chain. The nascent polypeptides leave the ribosome through a tunnel in the LSU and interact with protein factors that function in enzymatic processing, targeting, and the membrane insertion of nascent chains at the exit of the ribosomal tunnel. In Schizosaccharomyces pombe (strain 972 / ATCC 24843) (Fission yeast), this protein is Small ribosomal subunit protein eS32A (rpl4101).